The primary structure comprises 340 residues: E3 ubiquitin ligase BIG BROTHER-related (340 aa).

Disordered stretches follow at residues 1–56 (MPME…GVGE) and 133–182 (YDED…GNSD). Residues 34 to 46 (NRQTGVVSDTGSG) are compositionally biased toward polar residues. 2 stretches are compositionally biased toward acidic residues: residues 133–164 (YDED…EDGL) and 173–182 (DDQEDDGNSD). The segment at 288–329 (CVICRLDYEDDEDLILLPCKHSYHSECINNWLKINKVCPVCS) adopts an RING-type; atypical zinc-finger fold.

In terms of processing, auto-ubiquitinated.

It catalyses the reaction S-ubiquitinyl-[E2 ubiquitin-conjugating enzyme]-L-cysteine + [acceptor protein]-L-lysine = [E2 ubiquitin-conjugating enzyme]-L-cysteine + N(6)-ubiquitinyl-[acceptor protein]-L-lysine.. It participates in protein modification; protein ubiquitination. E3 ubiquitin-ligase probably involved in organ size regulation. The protein is E3 ubiquitin ligase BIG BROTHER-related (BBR) of Arabidopsis thaliana (Mouse-ear cress).